The chain runs to 549 residues: Probable protein kinase UbiB (549 aa).

One can recognise a Protein kinase domain in the interval Asn123–Leu501. ATP contacts are provided by residues Leu129 to Val137 and Lys152. The Proton acceptor role is filled by Asp287. 2 consecutive transmembrane segments (helical) span residues Ser498–Gln518 and Ala520–Trp540.

This sequence belongs to the ABC1 family. UbiB subfamily.

It is found in the cell inner membrane. The protein operates within cofactor biosynthesis; ubiquinone biosynthesis [regulation]. Functionally, is probably a protein kinase regulator of UbiI activity which is involved in aerobic coenzyme Q (ubiquinone) biosynthesis. The sequence is that of Probable protein kinase UbiB from Shewanella loihica (strain ATCC BAA-1088 / PV-4).